The primary structure comprises 854 residues: Protein unc-33 (854 aa).

Disordered regions lie at residues 57–114, 130–327, and 794–854; these read ETVS…IPAP, ELFG…DGNG, and VERV…TGFW. Composition is skewed to polar residues over residues 58–68 and 75–97; these read TVSNKSRSSEG and RPNS…TSAR. The segment covering 193-202 has biased composition (basic and acidic residues); sequence KVLRGEKSTP. Positions 240-257 are enriched in acidic residues; it reads VDDEEEPEAEAQEMEEPQ. Residues 279–298 show a composition bias toward basic and acidic residues; the sequence is HPSEDGDSTRNGETPTDRRN. Over residues 802–811 the composition is skewed to polar residues; it reads SSQQQKPQQN. Basic and acidic residues predominate over residues 816–827; sequence NSGDFDRNRTKV.

It belongs to the metallo-dependent hydrolases superfamily. Hydantoinase/dihydropyrimidinase family. Isoform a: Probable monomer. Isoform b: Probable homodimer. Isoform c: Probable homodimer. Probable heterodimer composed of isoform b and isoform c. Interacts with unc-14 and kinesin-1 motor complex light chain klc-1; both interactions regulate unc-33 neurite localization. Interacts with fln-1 (via calponin-homology (CH) domains and filamin repeat 18-19). Isoform c: Interacts with vab-8 isoform a. In terms of tissue distribution, expressed in ventral cord and nerve ring (at protein level). Isoform a: Expressed in nerve ring (at protein level). Expressed in the nervous system, two amphid socket cells and weakly in non-neuronal pharyngeal cells.

It localises to the cell projection. It is found in the axon. Its subcellular location is the dendrite. Functionally, during neurogenesis, plays an essential role in axonal guidance and outgrowth by regulating the polarization of both microtubule and actin cytoskeletons. Establishes the asymmetry of axonal and dendrite microtubules and the polarized sorting of neuronal proteins. This is achieved in part by regulating the localization of kinesin-like protein unc-104. In neurons without a distal microtubule-organizing center (MTOC), also controls the organization of microtubules in dendrites. During the dorso-ventral axonal guidance and outgrowth of VD neurons, required downstream of Rac GTPases ced-10 and mig-2 to inhibit growth cone filopodial protrusion mediated by the unc-6/netrin receptor unc-40-unc-5. Specifically, regulates growth cone filopodial protrusion polarity, and thus migration, by promoting F-actin polarization and by restricting plus-end microtubule accumulation in the growth cone. Probably downstream of mab-20/Sema2a and mab-20 receptor plx-2, regulates the guidance of DD/VD neuron axons by modulating fln-1 interaction with F-actin which results in the remodeling of the actin cytoskeleton. In hermaphrodites, involved in sex myoblast (SM) migration by regulating the gonad-dependent repulsion of SMs. In terms of biological role, in neurons, required for the polarized sorting of axonal proteins. In PLM neuron, regulates innexin unc-9 gap junction turnover by suppressing unc-9 transport out of gap junctions. Plays a role in locomotion and egg-laying. In PLM neuron, regulates innexin unc-9 gap junction turnover by suppressing unc-9 transport out of gap junctions. The protein is Protein unc-33 of Caenorhabditis elegans.